Reading from the N-terminus, the 498-residue chain is ADP,ATP carrier protein 1 (498 aa).

The Cytoplasmic segment spans residues 1-33 (MSTSKSENYLSELRKIIWPIEQYENKKFLPLAF). Residues 34 to 54 (MMFCILLNYSTLRSIKDGFVV) traverse the membrane as a helical segment. C37 and C85 are oxidised to a cystine. Residues 55–67 (TDIGTESISFLKT) are Extracellular-facing. The helical transmembrane segment at 68–88 (YIVLPSAVIAMIIYVKLCDIL) threads the bilayer. At 89 to 92 (KQEN) the chain is on the cytoplasmic side. The chain crosses the membrane as a helical span at residues 93–113 (VFYVITSFFLGYFALFAFVLY). The Extracellular portion of the chain corresponds to 114–147 (PYPDLVHPDHKTIESLSLAYPNFKWFIKIVGKWS). The helical transmembrane segment at 148–168 (FASFYTIAELWGTMMLSLLFW) threads the bilayer. Over 169 to 184 (QFANQITKIAEAKRFY) the chain is Cytoplasmic. Residues 185–205 (SMFGLLANLALPVTSVVIGYF) form a helical membrane-spanning segment. Residues 206 to 218 (LHEKTQIVAEHLK) are Extracellular-facing. A helical membrane pass occupies residues 219–239 (FVPLFVIMITSSFLIILTYRW). Residues 240–279 (MNKNVLTDPRLYDPALVKEKKTKAKLSFIESLKMIFTSKY) lie on the Cytoplasmic side of the membrane. A helical membrane pass occupies residues 280-300 (VGYIALLIIAYGVSVNLVEGV). The Extracellular portion of the chain corresponds to 301–320 (WKSKVKELYPTKEAYTIYMG). Residues 321–341 (QFQFYQGWVAIAFMLIGSNIL) form a helical membrane-spanning segment. At 342 to 348 (RKVSWLT) the chain is on the cytoplasmic side. The chain crosses the membrane as a helical span at residues 349 to 369 (AAMITPLMMFITGAAFFSFIF). Residues 370–379 (FDSVIAMNLT) are Extracellular-facing. A helical transmembrane segment spans residues 380–400 (GILASSPLTLAVMIGMIQNVL). At 401–438 (SKGVKYSLFDATKNMAYIPLDKDLRVKGQAAVEVIGGR) the chain is on the cytoplasmic side. Position 436 to 442 (436 to 442 (GGRLGKS)) interacts with ATP. A helical transmembrane segment spans residues 439–459 (LGKSGGAIIQSTFFILFPVFG). Over 460–465 (FIEATP) the chain is Extracellular. A helical transmembrane segment spans residues 466 to 486 (YFASIFFIIVILWIFAVKGLN). Over 487-498 (KEYQVLVNKNEK) the chain is Cytoplasmic.

It belongs to the ADP/ATP translocase tlc family.

The protein resides in the cell membrane. Its function is as follows. Provides the rickettsial cell with host ATP in exchange for rickettsial ADP. This is an obligate exchange system. This energy acquiring activity is an important component of rickettsial parasitism. The polypeptide is ADP,ATP carrier protein 1 (tlcA) (Rickettsia prowazekii (strain Madrid E)).